We begin with the raw amino-acid sequence, 396 residues long: Activity-regulated cytoskeleton-associated protein (396 aa).

Positions 54-78 (SKQVERELKGLHRSVGKLENNLDGY) form a coiled coil. An interaction with SH3GL1 or SH3GL3 region spans residues 89 to 100 (KSIKACLCRCQE). The disordered stretch occupies residues 177 to 207 (PPAAGELPEQESVEAQQYQSWGPGEDGQPSP). The interaction with DNM2 stretch occupies residues 195–214 (QSWGPGEDGQPSPGVDTQIF). The residue at position 260 (S260) is a Phosphoserine; by CaMK2. Glycyl lysine isopeptide (Lys-Gly) (interchain with G-Cter in ubiquitin) cross-links involve residues K268 and K269. At T278 the chain carries Phosphothreonine. The segment at 356-396 (QDGLEQAAEPSGTPLPTEDETEALTPALTSESVASDRTQPE) is disordered. A compositionally biased stretch (polar residues) spans 382 to 396 (ALTSESVASDRTQPE).

This sequence belongs to the ARC/ARG3.1 family. Homooligomer; homooligomerizes into virion-like capsids. Interacts with SH3GL1/endophilin-2, SH3GL3/endophilin-3 and DNM2/DYN2. Interacts with CAMK2B (in the kinase inactive state); leading to target ARC to inactive synapses. Interacts with PSEN1. Interacts with GRIN2A and GRIN2B; inhibiting homooligomerization. Post-translationally, ubiquitinated by UBE3A, leading to its degradation by the proteasome, thereby promoting AMPA receptors (AMPARs) expression at synapses. Ubiquitinated by RNF216 at Lys-268 and Lys-269 limiting ARC protein levels induced by synaptic activity and thus regulating ARC-dependent forms of synaptic plasticity. In terms of processing, palmitoylation anchors the protein into the membrane by allowing direct insertion into the hydrophobic core of the lipid bilayer. Phosphorylation at Ser-260 by CaMK2 prevents homooligomerization into virion-like capsids by disrupting an interaction surface essential for high-order oligomerization. Phosphorylation by CaMK2 inhibits synaptic activity. Expressed in brain and testis. In primary visual cortex, detected in all cortical layers with the exception of layer 5: present at highest level in layers 2/3 and 4, the predominant sites of ocular dominance plasticity (at protein level). Also expressed in skin-migratory dendritic cells.

The protein localises to the extracellular vesicle membrane. It is found in the postsynaptic cell membrane. Its subcellular location is the synapse. The protein resides in the postsynaptic density. It localises to the early endosome membrane. The protein localises to the cell projection. It is found in the dendrite. Its subcellular location is the cytoplasm. The protein resides in the cytoskeleton. It localises to the cell cortex. The protein localises to the dendritic spine. It is found in the cytoplasmic vesicle. Its subcellular location is the secretory vesicle. The protein resides in the acrosome. It localises to the clathrin-coated vesicle membrane. Functionally, master regulator of synaptic plasticity that self-assembles into virion-like capsids that encapsulate RNAs and mediate intercellular RNA transfer in the nervous system. ARC protein is released from neurons in extracellular vesicles that mediate the transfer of ARC mRNA into new target cells, where ARC mRNA can undergo activity-dependent translation. ARC capsids are endocytosed and are able to transfer ARC mRNA into the cytoplasm of neurons. Acts as a key regulator of synaptic plasticity: required for protein synthesis-dependent forms of long-term potentiation (LTP) and depression (LTD) and for the formation of long-term memory. Regulates synaptic plasticity by promoting endocytosis of AMPA receptors (AMPARs) in response to synaptic activity: this endocytic pathway maintains levels of surface AMPARs in response to chronic changes in neuronal activity through synaptic scaling, thereby contributing to neuronal homeostasis. Acts as a postsynaptic mediator of activity-dependent synapse elimination in the developing cerebellum by mediating elimination of surplus climbing fiber synapses. Accumulates at weaker synapses, probably to prevent their undesired enhancement. This suggests that ARC-containing virion-like capsids may be required to eliminate synaptic material. Required to transduce experience into long-lasting changes in visual cortex plasticity and for long-term memory. Involved in postsynaptic trafficking and processing of amyloid-beta A4 (APP) via interaction with PSEN1. In addition to its role in synapses, also involved in the regulation of the immune system: specifically expressed in skin-migratory dendritic cells and regulates fast dendritic cell migration, thereby regulating T-cell activation. The protein is Activity-regulated cytoskeleton-associated protein of Mus musculus (Mouse).